Here is a 550-residue protein sequence, read N- to C-terminus: Pectinesterase 2.1 (550 aa).

Asn-179 is a glycosylation site (N-linked (GlcNAc...) asparagine). Positions 312 and 342 each coordinate substrate. Cys-331 and Cys-358 are joined by a disulfide. Residue Asp-365 is the Proton donor of the active site. The Nucleophile role is filled by Asp-386. The cysteines at positions 399 and 433 are disulfide-linked. 2 residues coordinate substrate: Arg-454 and Trp-456.

This sequence in the N-terminal section; belongs to the PMEI family. The protein in the C-terminal section; belongs to the pectinesterase family.

It is found in the secreted. The protein localises to the cell wall. The enzyme catalyses [(1-&gt;4)-alpha-D-galacturonosyl methyl ester](n) + n H2O = [(1-&gt;4)-alpha-D-galacturonosyl](n) + n methanol + n H(+). Its pathway is glycan metabolism; pectin degradation; 2-dehydro-3-deoxy-D-gluconate from pectin: step 1/5. Pectinesterase may play a role in cell wall metabolism during fruit growth and development prior to ripening and may be required for preparing cell walls for softening by polygalacturonase during fruit ripening. This Solanum lycopersicum (Tomato) protein is Pectinesterase 2.1 (PME2.1).